Here is a 532-residue protein sequence, read N- to C-terminus: Bone morphogenetic protein receptor type-1A (532 aa).

The first 23 residues, 1-23, serve as a signal peptide directing secretion; it reads MPQLYIYIRLLGAYLFIISRVQG. Topologically, residues 24–152 are extracellular; sequence QNLDSMLHGT…IGPFFDGSIR (129 aa). 3 cysteine pairs are disulfide-bonded: Cys-61-Cys-82, Cys-63-Cys-67, and Cys-76-Cys-100. N-linked (GlcNAc...) asparagine glycosylation occurs at Asn-73. The tract at residues 107–109 is mediates specificity for BMP ligand; sequence DFQ. Intrachain disulfides connect Cys-110–Cys-124 and Cys-125–Cys-130. Residues 153 to 176 traverse the membrane as a helical segment; it reads WLVLLISMAVCIIAMIIFSSCFCY. At 177–532 the chain is on the cytoplasmic side; the sequence is KHYCKSISSR…KMVESQDVKI (356 aa). The 30-residue stretch at 204 to 233 folds into the GS domain; that stretch reads ESLKDLIDQSQSSGSGSGLPLLVQRTIAKQ. In terms of domain architecture, Protein kinase spans 234-525; it reads IQMVRQVGKG…RIKKTLAKMV (292 aa). Residues 240–248 and Lys-261 each bind ATP; that span reads VGKGRYGEV. Asp-362 acts as the Proton acceptor in catalysis.

This sequence belongs to the protein kinase superfamily. TKL Ser/Thr protein kinase family. TGFB receptor subfamily. As to quaternary structure, interacts with low affinity with GDF5; positively regulates chondrocyte differentiation. Interacts with BMP4. Interacts with SCUBE3. Interacts with TSC22D1/TSC-22. Interacts with BMP2; the interaction may induce HAMP expression. Interacts with BMP6. Interacts with heterodimers composed of BMP2 and BMP6 in vitro; the interaction may induce HAMP expression. Interacts with TGFBR3. Mg(2+) serves as cofactor. Mn(2+) is required as a cofactor. Post-translationally, glycosylated. As to expression, highly expressed in skeletal muscle.

The protein localises to the cell membrane. It localises to the cell surface. It catalyses the reaction L-threonyl-[receptor-protein] + ATP = O-phospho-L-threonyl-[receptor-protein] + ADP + H(+). The catalysed reaction is L-seryl-[receptor-protein] + ATP = O-phospho-L-seryl-[receptor-protein] + ADP + H(+). On ligand binding, forms a receptor complex consisting of two type II and two type I transmembrane serine/threonine kinases. Type II receptors phosphorylate and activate type I receptors which autophosphorylate, then bind and activate SMAD transcriptional regulators. Receptor for BMP2, BMP4, GDF5 and GDF6. Positively regulates chondrocyte differentiation through GDF5 interaction. Mediates induction of adipogenesis by GDF6. May promote the expression of HAMP, potentially via its interaction with BMP2. The chain is Bone morphogenetic protein receptor type-1A (BMPR1A) from Homo sapiens (Human).